Reading from the N-terminus, the 425-residue chain is Enolase (425 aa).

The interval 31 to 54 (TGSAIVPSGASTGEKEAVELRDSD) is disordered. Over residues 43-54 (GEKEAVELRDSD) the composition is skewed to basic and acidic residues. Q162 contacts (2R)-2-phosphoglycerate. E204 serves as the catalytic Proton donor. Mg(2+) contacts are provided by D241, E285, and D312. Residues K337, R366, S367, and K388 each contribute to the (2R)-2-phosphoglycerate site. Catalysis depends on K337, which acts as the Proton acceptor.

Belongs to the enolase family. It depends on Mg(2+) as a cofactor.

Its subcellular location is the cytoplasm. The protein localises to the secreted. It localises to the cell surface. It catalyses the reaction (2R)-2-phosphoglycerate = phosphoenolpyruvate + H2O. The protein operates within carbohydrate degradation; glycolysis; pyruvate from D-glyceraldehyde 3-phosphate: step 4/5. In terms of biological role, catalyzes the reversible conversion of 2-phosphoglycerate (2-PG) into phosphoenolpyruvate (PEP). It is essential for the degradation of carbohydrates via glycolysis. This chain is Enolase, found in Gloeobacter violaceus (strain ATCC 29082 / PCC 7421).